The sequence spans 349 residues: UDP-N-acetylenolpyruvoylglucosamine reductase (349 aa).

The FAD-binding PCMH-type domain occupies 25–197; that stretch reads GIAATARYAA…VAVTFRLPKR (173 aa). R173 is an active-site residue. The active-site Proton donor is S249. E345 is an active-site residue.

This sequence belongs to the MurB family. FAD serves as cofactor.

It localises to the cytoplasm. It carries out the reaction UDP-N-acetyl-alpha-D-muramate + NADP(+) = UDP-N-acetyl-3-O-(1-carboxyvinyl)-alpha-D-glucosamine + NADPH + H(+). Its pathway is cell wall biogenesis; peptidoglycan biosynthesis. Its function is as follows. Cell wall formation. The chain is UDP-N-acetylenolpyruvoylglucosamine reductase from Burkholderia vietnamiensis (strain G4 / LMG 22486) (Burkholderia cepacia (strain R1808)).